Reading from the N-terminus, the 141-residue chain is Endoribonuclease YbeY (141 aa).

Zn(2+)-binding residues include His105, His109, and Asp115.

The protein belongs to the endoribonuclease YbeY family. Requires Zn(2+) as cofactor.

The protein localises to the cytoplasm. In terms of biological role, single strand-specific metallo-endoribonuclease involved in late-stage 70S ribosome quality control and in maturation of the 3' terminus of the 16S rRNA. In Karelsulcia muelleri (strain GWSS) (Sulcia muelleri), this protein is Endoribonuclease YbeY.